We begin with the raw amino-acid sequence, 198 residues long: Protoplast secreted protein 2 (198 aa).

The signal sequence occupies residues 1–21 (MPRVAIIIYTLYGHVAATAEA). One can recognise a Flavodoxin-like domain in the interval 22–191 (EKKGIEAAGG…QVHEIQGKTF (170 aa)).

It belongs to the WrbA family.

It is found in the secreted. This Saccharomyces cerevisiae (strain ATCC 204508 / S288c) (Baker's yeast) protein is Protoplast secreted protein 2 (PST2).